Consider the following 238-residue polypeptide: Ubiquinone biosynthesis O-methyltransferase (238 aa).

The S-adenosyl-L-methionine site is built by R39, G59, D80, and M124.

Belongs to the methyltransferase superfamily. UbiG/COQ3 family.

The enzyme catalyses a 3-demethylubiquinol + S-adenosyl-L-methionine = a ubiquinol + S-adenosyl-L-homocysteine + H(+). It catalyses the reaction a 3-(all-trans-polyprenyl)benzene-1,2-diol + S-adenosyl-L-methionine = a 2-methoxy-6-(all-trans-polyprenyl)phenol + S-adenosyl-L-homocysteine + H(+). Its pathway is cofactor biosynthesis; ubiquinone biosynthesis. O-methyltransferase that catalyzes the 2 O-methylation steps in the ubiquinone biosynthetic pathway. The protein is Ubiquinone biosynthesis O-methyltransferase of Aeromonas salmonicida (strain A449).